We begin with the raw amino-acid sequence, 211 residues long: Prolactin (211 aa).

The first 24 residues, 1-24 (MTHRRTKLFMMAAVVSYVMTSCGA), serve as a signal peptide directing secretion. 2 disulfides stabilise this stretch: C70-C184 and C201-C211.

It belongs to the somatotropin/prolactin family.

It localises to the secreted. The polypeptide is Prolactin (prl) (Paralichthys olivaceus (Bastard halibut)).